Consider the following 1242-residue polypeptide: ATP-dependent helicase/nuclease subunit A (1242 aa).

The region spanning 13-486 (SQWTDDQWKA…IDLAKNFRSR (474 aa)) is the UvrD-like helicase ATP-binding domain. 34 to 41 (AAAGSGKT) contacts ATP. In terms of domain architecture, UvrD-like helicase C-terminal spans 506-806 (GEIEYDADAE…RIMTIHKSKG (301 aa)).

The protein belongs to the helicase family. AddA subfamily. As to quaternary structure, heterodimer of AddA and AddB/RexB. It depends on Mg(2+) as a cofactor.

It carries out the reaction Couples ATP hydrolysis with the unwinding of duplex DNA by translocating in the 3'-5' direction.. The enzyme catalyses ATP + H2O = ADP + phosphate + H(+). Functionally, the heterodimer acts as both an ATP-dependent DNA helicase and an ATP-dependent, dual-direction single-stranded exonuclease. Recognizes the chi site generating a DNA molecule suitable for the initiation of homologous recombination. The AddA nuclease domain is required for chi fragment generation; this subunit has the helicase and 3' -&gt; 5' nuclease activities. The polypeptide is ATP-dependent helicase/nuclease subunit A (Bacillus cytotoxicus (strain DSM 22905 / CIP 110041 / 391-98 / NVH 391-98)).